A 585-amino-acid polypeptide reads, in one-letter code: SCF E3 ubiquitin ligase complex F-box protein grrA (585 aa).

Residues 1–10 are compositionally biased toward polar residues; sequence MARSRQPTRF. 2 disordered regions span residues 1–34 and 41–60; these read MARS…DTDF and DSQS…QNDP. Low complexity predominate over residues 11–25; sequence SSEAPSESSSSTSPE. An F-box domain is found at 65-113; sequence PPIAYLPPEILISIFSKLSSPRDLLSCLLVCRIWALNCVGLLWHRPSCN. LRR repeat units follow at residues 147 to 171, 172 to 197, 198 to 223, 224 to 249, 250 to 275, 276 to 301, 302 to 329, 330 to 355, 356 to 381, 382 to 407, 408 to 432, 433 to 465, and 466 to 491; these read TEDV…TLTN, CRKL…DVSE, LRSL…NITG, CVKV…KLNG, VSQV…DLQE, CKLV…RLAH, CTEI…DLTA, CENI…VLAK, CKFI…HLGH, CSNI…DLAC, CSRL…GLVK, CQLI…HLSY, and CVNL…SLTG.

In terms of assembly, part of a SCF E3 ubiquitin ligase complex. In terms of tissue distribution, specifically expressed in ascus mother cells.

Its subcellular location is the cytoplasm. Involved in meiosis and required for ascospore formation. Involved in substrate recognition in ubiquitin-dependent degradation. This Emericella nidulans (strain FGSC A4 / ATCC 38163 / CBS 112.46 / NRRL 194 / M139) (Aspergillus nidulans) protein is SCF E3 ubiquitin ligase complex F-box protein grrA (grrA).